Reading from the N-terminus, the 35-residue chain is LSLLGHDERVTPEPFDSVTAQNARGNQADVQSLPR.

The segment covering 1–11 has biased composition (basic and acidic residues); the sequence is LSLLGHDERVT. Residues 1–35 form a disordered region; that stretch reads LSLLGHDERVTPEPFDSVTAQNARGNQADVQSLPR. Polar residues predominate over residues 18 to 35; the sequence is VTAQNARGNQADVQSLPR.

This sequence belongs to the peroxidase family. Requires heme b as cofactor. Ca(2+) is required as a cofactor.

It carries out the reaction 2 Mn(2+) + H2O2 + 2 H(+) = 2 Mn(3+) + 2 H2O. Has manganese peroxidase activity. The sequence is that of Manganese peroxidase from Irpex lacteus (Milk-white toothed polypore).